Consider the following 159-residue polypeptide: Putative UPF0479 protein YDR545C-A (159 aa).

The next 2 helical transmembrane spans lie at 38 to 58 (IVFCLPFFPALFLVPVQKVLQ) and 135 to 155 (VPMIWLDVFQVFFVFLVISQH).

This sequence belongs to the UPF0479 family.

It is found in the membrane. The polypeptide is Putative UPF0479 protein YDR545C-A (Saccharomyces cerevisiae (strain ATCC 204508 / S288c) (Baker's yeast)).